Consider the following 439-residue polypeptide: Xylose isomerase (439 aa).

Catalysis depends on residues H101 and D104. E232, E268, H271, D296, D307, D309, and D339 together coordinate Mg(2+).

The protein belongs to the xylose isomerase family. In terms of assembly, homotetramer. Requires Mg(2+) as cofactor.

It is found in the cytoplasm. The catalysed reaction is alpha-D-xylose = alpha-D-xylulofuranose. The protein is Xylose isomerase of Haemophilus influenzae (strain 86-028NP).